We begin with the raw amino-acid sequence, 85 residues long: MAHKKAGGSTRNGRDSNAQRLGVKRFGGESVLAGNIIVRQRGTKFHAGTNVGCGKDHTLFALTDGKVQFEVKGPKNRKYISIVAE.

The disordered stretch occupies residues 1–21 (MAHKKAGGSTRNGRDSNAQRL). Residues 9-19 (STRNGRDSNAQ) show a composition bias toward polar residues.

This sequence belongs to the bacterial ribosomal protein bL27 family.

The chain is Large ribosomal subunit protein bL27 from Pectobacterium carotovorum subsp. carotovorum (strain PC1).